Reading from the N-terminus, the 419-residue chain is Lipoyl synthase, mitochondrial (419 aa).

The transit peptide at methionine 1–tyrosine 26 directs the protein to the mitochondrion. A compositionally biased stretch (low complexity) spans threonine 28–alanine 47. Positions threonine 28 to asparagine 61 are disordered. Residues cysteine 136, cysteine 141, cysteine 147, cysteine 167, cysteine 171, cysteine 174, and serine 382 each coordinate [4Fe-4S] cluster. The 222-residue stretch at glycine 150–leucine 371 folds into the Radical SAM core domain. Residues alanine 399 to arginine 419 form a disordered region.

Belongs to the radical SAM superfamily. Lipoyl synthase family. [4Fe-4S] cluster serves as cofactor.

The protein resides in the mitochondrion. It carries out the reaction [[Fe-S] cluster scaffold protein carrying a second [4Fe-4S](2+) cluster] + N(6)-octanoyl-L-lysyl-[protein] + 2 oxidized [2Fe-2S]-[ferredoxin] + 2 S-adenosyl-L-methionine + 4 H(+) = [[Fe-S] cluster scaffold protein] + N(6)-[(R)-dihydrolipoyl]-L-lysyl-[protein] + 4 Fe(3+) + 2 hydrogen sulfide + 2 5'-deoxyadenosine + 2 L-methionine + 2 reduced [2Fe-2S]-[ferredoxin]. It functions in the pathway protein modification; protein lipoylation via endogenous pathway; protein N(6)-(lipoyl)lysine from octanoyl-[acyl-carrier-protein]: step 2/2. Functionally, catalyzes the radical-mediated insertion of two sulfur atoms into the C-6 and C-8 positions of the octanoyl moiety bound to the lipoyl domains of lipoate-dependent enzymes, thereby converting the octanoylated domains into lipoylated derivatives. This is Lipoyl synthase, mitochondrial from Coccidioides posadasii (strain C735) (Valley fever fungus).